The chain runs to 714 residues: Calpain-1 catalytic subunit (714 aa).

The 300-residue stretch at 55 to 354 folds into the Calpain catalytic domain; the sequence is LFRDEAFPPV…FTRLEICNLT (300 aa). Gln-109 and Asp-114 together coordinate Ca(2+). Active-site residues include Cys-115, His-272, and Asn-296. 3 residues coordinate Ca(2+): Asn-316, Asp-318, and Asp-323. Thr-354 is subject to Phosphothreonine. The interval 355–526 is domain III; it reads PDALKSRTIR…KSAGTAELDD (172 aa). The linker stretch occupies residues 527–542; sequence QIQANLPDEQVLSEEE. EF-hand domains are found at residues 541-576, 585-618, 615-650, and 680-714; these read EEIDENFKALFRQLAGEDMETSVKELRTILNRIISK, FSLESCRSMVNLMDRDGNGKLGLVEFNILWNRIR, NRIRNYLSIFRKFDLDKSGSMSAYEMRMAIESAGFK, and VRLETMFRFFKTLDTDLDGVVTFDLFKWLQLTMFA. Residues 543-713 are domain IV; the sequence is IDENFKALFR…LFKWLQLTMF (171 aa). Residues Asp-598, Asp-600, Asn-602, Lys-604, Glu-609, Asp-628, Asp-630, Ser-632, Ser-634, and Glu-639 each contribute to the Ca(2+) site.

Belongs to the peptidase C2 family. In terms of assembly, forms a heterodimer with a small (regulatory) subunit CAPNS1. The cofactor is Ca(2+). Undergoes calcium-induced successive autoproteolytic cleavages that generate a membrane-bound 78 kDa active form and an intracellular 75 kDa active form. Calpastatin reduces with high efficiency the transition from 78 kDa to 75 kDa calpain forms.

It localises to the cytoplasm. It is found in the cell membrane. It carries out the reaction Broad endopeptidase specificity.. Its activity is regulated as follows. Activated by micromolar concentrations of calcium and inhibited by calpastatin. In terms of biological role, calcium-regulated non-lysosomal thiol-protease which catalyzes limited proteolysis of substrates involved in cytoskeletal remodeling and signal transduction. Proteolytically cleaves CTBP1. Cleaves and activates caspase-7 (CASP7). This chain is Calpain-1 catalytic subunit, found in Pongo abelii (Sumatran orangutan).